The sequence spans 288 residues: Sulfur carrier protein FdhD (288 aa).

Catalysis depends on cysteine 122, which acts as the Cysteine persulfide intermediate. 268–273 (FVRGER) serves as a coordination point for Mo-bis(molybdopterin guanine dinucleotide).

The protein belongs to the FdhD family.

It is found in the cytoplasm. Functionally, required for formate dehydrogenase (FDH) activity. Acts as a sulfur carrier protein that transfers sulfur from IscS to the molybdenum cofactor prior to its insertion into FDH. The protein is Sulfur carrier protein FdhD of Anaeromyxobacter dehalogenans (strain 2CP-1 / ATCC BAA-258).